The chain runs to 1296 residues: Probable serine/threonine protein kinase IREH1 (1296 aa).

3 disordered regions span residues 1 to 274 (MVFK…SESP), 457 to 480 (SGAG…QEQH), and 524 to 553 (SPAL…VGSR). The span at 10-32 (SSKKSGSSSPDSSNSPRSVGSNS) shows a compositional bias: low complexity. Residue serine 32 is modified to Phosphoserine. Basic and acidic residues-rich tracts occupy residues 68–77 (DGLKKKDGSS), 101–112 (EVKKPPPPEVKE), and 178–208 (RKKE…RDSL). Positions 214 to 249 (PPRSLSPTLPPSGSRLQNVASSSGTGRSEMSSGRSG) are enriched in low complexity. The C2H2-type; atypical zinc finger occupies 602 to 621 (CRICEEEVPTTHVEDHSRVC). The disordered stretch occupies residues 724 to 750 (FGPKSDQGMTTSSASSMTPRSPIPTPR). Polar residues predominate over residues 730 to 740 (QGMTTSSASSM). The region spanning 882-1171 (FEIIKPISRG…AAEVKQHIFF (290 aa)) is the Protein kinase domain. ATP contacts are provided by residues 888–896 (ISRGAFGRV) and lysine 911. Catalysis depends on aspartate 1005, which acts as the Proton acceptor. Phosphoserine is present on serine 1070. Positions 1172 to 1277 (KDINWDTLAR…KNLSQLASIN (106 aa)) constitute an AGC-kinase C-terminal domain. Residues 1214–1245 (PSGEVPDYSDADSMTNSSGCSSNHHEEGEAEE) are disordered. Residues 1225 to 1235 (DSMTNSSGCSS) show a composition bias toward polar residues. Over residues 1236–1245 (NHHEEGEAEE) the composition is skewed to basic and acidic residues.

Belongs to the protein kinase superfamily. AGC Ser/Thr protein kinase family.

It catalyses the reaction L-seryl-[protein] + ATP = O-phospho-L-seryl-[protein] + ADP + H(+). The enzyme catalyses L-threonyl-[protein] + ATP = O-phospho-L-threonyl-[protein] + ADP + H(+). May be involved in root hair elongation. This is Probable serine/threonine protein kinase IREH1 from Arabidopsis thaliana (Mouse-ear cress).